A 1007-amino-acid polypeptide reads, in one-letter code: Integrator complex subunit 8 (1007 aa).

Residues 19–24 (WFEFLL) carry the WFEF motif motif. The span at 56–78 (TAQESVGTPGSDLQNLNQTPSNS) shows a compositional bias: polar residues. The interval 56–112 (TAQESVGTPGSDLQNLNQTPSNSGPIPGVVGGAPAPTTPTASGGVGMPHSPQRPAEK) is disordered. Positions 79–97 (GPIPGVVGGAPAPTTPTAS) are enriched in low complexity.

It belongs to the Integrator subunit 8 family. As to quaternary structure, belongs to the multiprotein complex Integrator, at least composed of IntS1, IntS2, IntS3, IntS4, omd/IntS5, IntS6, defl/IntS7, IntS8, IntS9, IntS10, IntS11, IntS12, asun/IntS13, IntS14 and IntS15. The core complex associates with protein phosphatase 2A subunits mts/PP2A and Pp2A-29B, to form the Integrator-PP2A (INTAC) complex.

The protein localises to the nucleus. The protein resides in the chromosome. Functionally, component of the integrator complex, a multiprotein complex that terminates RNA polymerase II (Pol II) transcription in the promoter-proximal region of genes. The integrator complex provides a quality checkpoint during transcription elongation by driving premature transcription termination of transcripts that are unfavorably configured for transcriptional elongation: the complex terminates transcription by (1) catalyzing dephosphorylation of the C-terminal domain (CTD) of Pol II subunit Polr2A/Rbp1 and Spt5, and (2) degrading the exiting nascent RNA transcript via endonuclease activity. The integrator complex is also involved in the 3'-end processing of the U7 snRNA, and also the spliceosomal snRNAs U1, U2, U4 and U5. Within the integrator complex, INTS8 is required for the recruitment of protein phosphatase 2A (PP2A) to transcription pause-release checkpoint. This Drosophila melanogaster (Fruit fly) protein is Integrator complex subunit 8.